The sequence spans 132 residues: Small ribosomal subunit protein uS8c (132 aa).

The protein belongs to the universal ribosomal protein uS8 family. In terms of assembly, part of the 30S ribosomal subunit.

It localises to the plastid. The protein resides in the chloroplast. One of the primary rRNA binding proteins, it binds directly to 16S rRNA central domain where it helps coordinate assembly of the platform of the 30S subunit. The sequence is that of Small ribosomal subunit protein uS8c (rps8) from Nymphaea alba (White water-lily).